The chain runs to 278 residues: Formamidopyrimidine-DNA glycosylase (278 aa).

Pro2 (schiff-base intermediate with DNA) is an active-site residue. Glu3 serves as the catalytic Proton donor. Catalysis depends on Lys58, which acts as the Proton donor; for beta-elimination activity. Residues His91, Arg109, and Arg158 each coordinate DNA. An FPG-type zinc finger spans residues 243-277 (KVYDRKGLPCKVCKTPISQMVQGQRTTYFCSQCQK). Arg267 serves as the catalytic Proton donor; for delta-elimination activity.

This sequence belongs to the FPG family. In terms of assembly, monomer. It depends on Zn(2+) as a cofactor.

The catalysed reaction is Hydrolysis of DNA containing ring-opened 7-methylguanine residues, releasing 2,6-diamino-4-hydroxy-5-(N-methyl)formamidopyrimidine.. It carries out the reaction 2'-deoxyribonucleotide-(2'-deoxyribose 5'-phosphate)-2'-deoxyribonucleotide-DNA = a 3'-end 2'-deoxyribonucleotide-(2,3-dehydro-2,3-deoxyribose 5'-phosphate)-DNA + a 5'-end 5'-phospho-2'-deoxyribonucleoside-DNA + H(+). Functionally, involved in base excision repair of DNA damaged by oxidation or by mutagenic agents. Acts as a DNA glycosylase that recognizes and removes damaged bases. Has a preference for oxidized purines, such as 7,8-dihydro-8-oxoguanine (8-oxoG). Has AP (apurinic/apyrimidinic) lyase activity and introduces nicks in the DNA strand. Cleaves the DNA backbone by beta-delta elimination to generate a single-strand break at the site of the removed base with both 3'- and 5'-phosphates. The polypeptide is Formamidopyrimidine-DNA glycosylase (Polynucleobacter necessarius subsp. necessarius (strain STIR1)).